The chain runs to 232 residues: Large ribosomal subunit protein uL10c (232 aa).

A chloroplast-targeting transit peptide spans methionine 1 to alanine 52.

It belongs to the universal ribosomal protein uL10 family. Component of the chloroplast large ribosomal subunit (LSU). Mature 70S chloroplast ribosomes of higher plants consist of a small (30S) and a large (50S) subunit. The 30S small subunit contains 1 molecule of ribosomal RNA (16S rRNA) and 24 different proteins. The 50S large subunit contains 3 rRNA molecules (23S, 5S and 4.5S rRNA) and 33 different proteins.

The protein localises to the plastid. It is found in the chloroplast. Its function is as follows. Component of the chloroplast ribosome (chloro-ribosome), a dedicated translation machinery responsible for the synthesis of chloroplast genome-encoded proteins, including proteins of the transcription and translation machinery and components of the photosynthetic apparatus. The sequence is that of Large ribosomal subunit protein uL10c (RPL10) from Spinacia oleracea (Spinach).